The sequence spans 196 residues: Putative manganese efflux pump MntP (196 aa).

A run of 6 helical transmembrane segments spans residues 3 to 23 (PASLILLAFAMSTDAFAASIG), 39 to 59 (IGAVFGVVEAIMPLLGWALGH), 67 to 87 (GVDHWIAFVMLALLGGHMIWA), 109 to 129 (IWLIAFTALATSIDAMAVGIT), 137 to 157 (IIAASVAIGLATALMVTLGTL), and 172 to 192 (ILGGLILIGIGIAVLYEHLAG).

This sequence belongs to the MntP (TC 9.B.29) family.

The protein localises to the cell inner membrane. In terms of biological role, probably functions as a manganese efflux pump. This is Putative manganese efflux pump MntP from Chromohalobacter salexigens (strain ATCC BAA-138 / DSM 3043 / CIP 106854 / NCIMB 13768 / 1H11).